A 1252-amino-acid chain; its full sequence is DNA-directed RNA polymerase subunit beta (1252 aa).

Belongs to the RNA polymerase beta chain family. As to quaternary structure, the RNAP catalytic core consists of 2 alpha, 1 beta, 1 beta' and 1 omega subunit. When a sigma factor is associated with the core the holoenzyme is formed, which can initiate transcription.

The enzyme catalyses RNA(n) + a ribonucleoside 5'-triphosphate = RNA(n+1) + diphosphate. In terms of biological role, DNA-dependent RNA polymerase catalyzes the transcription of DNA into RNA using the four ribonucleoside triphosphates as substrates. The polypeptide is DNA-directed RNA polymerase subunit beta (Chlamydia muridarum (strain MoPn / Nigg)).